The chain runs to 214 residues: Orotate phosphoribosyltransferase (214 aa).

Lysine 26 is a binding site for 5-phospho-alpha-D-ribose 1-diphosphate. Residue 34-35 participates in orotate binding; that stretch reads FF. Residues 72–73, arginine 98, lysine 99, lysine 102, histidine 104, and 123–131 each bind 5-phospho-alpha-D-ribose 1-diphosphate; these read YK and DDVISAGTS. The orotate site is built by serine 127 and arginine 155.

The protein belongs to the purine/pyrimidine phosphoribosyltransferase family. PyrE subfamily. In terms of assembly, homodimer. Mg(2+) is required as a cofactor.

It catalyses the reaction orotidine 5'-phosphate + diphosphate = orotate + 5-phospho-alpha-D-ribose 1-diphosphate. The protein operates within pyrimidine metabolism; UMP biosynthesis via de novo pathway; UMP from orotate: step 1/2. Catalyzes the transfer of a ribosyl phosphate group from 5-phosphoribose 1-diphosphate to orotate, leading to the formation of orotidine monophosphate (OMP). This is Orotate phosphoribosyltransferase from Chromobacterium violaceum (strain ATCC 12472 / DSM 30191 / JCM 1249 / CCUG 213 / NBRC 12614 / NCIMB 9131 / NCTC 9757 / MK).